We begin with the raw amino-acid sequence, 761 residues long: DNA topoisomerase 1 (761 aa).

One can recognise a Toprim domain in the interval 6–143 (TALIICEKPS…KRMRFSSLTK (138 aa)). Mg(2+) contacts are provided by glutamate 12 and aspartate 111. Positions 157 to 569 (DYGLVDAGES…EAEKRLRKIL (413 aa)) constitute a Topo IA-type catalytic domain. Residues 196–201 (SVGRVQ) are interaction with DNA. Residue tyrosine 315 is the O-(5'-phospho-DNA)-tyrosine intermediate of the active site. 3 C4-type zinc fingers span residues 600–626 (CPKC…YPEC), 680–706 (CPKC…YPKC), and 721–747 (CPKC…YPKC).

Belongs to the type IA topoisomerase family. In terms of assembly, monomer. Requires Mg(2+) as cofactor.

It catalyses the reaction ATP-independent breakage of single-stranded DNA, followed by passage and rejoining.. Functionally, releases the supercoiling and torsional tension of DNA, which is introduced during the DNA replication and transcription, by transiently cleaving and rejoining one strand of the DNA duplex. Introduces a single-strand break via transesterification at a target site in duplex DNA. The scissile phosphodiester is attacked by the catalytic tyrosine of the enzyme, resulting in the formation of a DNA-(5'-phosphotyrosyl)-enzyme intermediate and the expulsion of a 3'-OH DNA strand. The free DNA strand then undergoes passage around the unbroken strand, thus removing DNA supercoils. Finally, in the religation step, the DNA 3'-OH attacks the covalent intermediate to expel the active-site tyrosine and restore the DNA phosphodiester backbone. The polypeptide is DNA topoisomerase 1 (Methanocaldococcus jannaschii (strain ATCC 43067 / DSM 2661 / JAL-1 / JCM 10045 / NBRC 100440) (Methanococcus jannaschii)).